The following is a 541-amino-acid chain: MESRRSANYQASIWDDNFIQSLASPYAGEKYAEKAEKLKTEVKTMIDQTRDELKQLELIDNLQRLGICHHFQDLTKKILQKIYGEERNGDHQHYKEKGLHFTALRFRILRQDGYHVPQDVFSSFMNKAGDFEESLSKDTKGLVSLYEASYLSMEGETILDMAKDFSSHHLHKMVEDATDKRVANQIIHSLEMPLHRRVQKLEAIWFIQFYECGSDANPTLVELAKLDFNMVQATYQEELKRLSRWYEETGLQEKLSFARHRLAEAFLWSMGIIPEGHFGYGRMHLMKIGAYITLLDDIYDVYGTLEELQVLTEIIERWDINLLDQLPEYMQIFFLYMFNSTNELAYEILRDQGINVISNLKGLWVELSQCYFKEATWFHNGYTPTTEEYLNVACISASGPVILFSGYFTTTNPINKHELQSLERHAHSLSMILRLADDLGTSSDEMKRGDVPKAIQCFMNDTGCCEEEARQHVKRLIDAEWKKMNKDILMEKPFKNFCPTAMNLGRISMSFYEHGDGYGGPHSDTKKKMVSLFVQPMNITI.

Mg(2+)-binding residues include aspartate 296, aspartate 300, aspartate 437, threonine 441, and glutamate 445. The DDXXD motif motif lies at 296-300 (DDIYD).

Belongs to the terpene synthase family. It depends on Mg(2+) as a cofactor. Requires Mn(2+) as cofactor.

The catalysed reaction is (2E,6E)-farnesyl diphosphate = alpha-zingiberene + diphosphate. Its pathway is secondary metabolite biosynthesis; terpenoid biosynthesis. Sesquiterpene synthase that catalyzes the formation of alpha-zingiberene and other sesquiterpenes from trans,trans-farnesyl diphosphate (FPP). May have an additional monoterpene synthase activity. In Ocimum basilicum (Sweet basil), this protein is Alpha-zingiberene synthase (ZIS).